The chain runs to 336 residues: Protein-arginine kinase (336 aa).

Residues 22–245 (IVMSSRIRLA…QQIINEEMQI (224 aa)) form the Phosphagen kinase C-terminal domain. ATP-binding positions include 25-29 (SSRIR), histidine 83, arginine 116, 167-171 (RASVM), and 198-203 (RGIYGE).

This sequence belongs to the ATP:guanido phosphotransferase family.

The catalysed reaction is L-arginyl-[protein] + ATP = N(omega)-phospho-L-arginyl-[protein] + ADP + H(+). In terms of biological role, catalyzes the specific phosphorylation of arginine residues in proteins. In Staphylococcus saprophyticus subsp. saprophyticus (strain ATCC 15305 / DSM 20229 / NCIMB 8711 / NCTC 7292 / S-41), this protein is Protein-arginine kinase.